A 141-amino-acid chain; its full sequence is MVLERTLSIIKPDAVAKNVIGDIYSRFEKAGLKIVAAKYKQLSRREAEGFYAVHRDRPFFNALVEFMISGPVMIQVLESENAVARHRELLGATNPKDAAPGTIRADFAESIEANAAHGSDSVENAAIEVAYFFAATEIILR.

6 residues coordinate ATP: K11, F59, R87, T93, R104, and N114. H117 functions as the Pros-phosphohistidine intermediate in the catalytic mechanism.

This sequence belongs to the NDK family. In terms of assembly, homotetramer. The cofactor is Mg(2+).

The protein resides in the cytoplasm. It carries out the reaction a 2'-deoxyribonucleoside 5'-diphosphate + ATP = a 2'-deoxyribonucleoside 5'-triphosphate + ADP. The catalysed reaction is a ribonucleoside 5'-diphosphate + ATP = a ribonucleoside 5'-triphosphate + ADP. In terms of biological role, major role in the synthesis of nucleoside triphosphates other than ATP. The ATP gamma phosphate is transferred to the NDP beta phosphate via a ping-pong mechanism, using a phosphorylated active-site intermediate. The sequence is that of Nucleoside diphosphate kinase from Xylella fastidiosa (strain M23).